The chain runs to 671 residues: Oviduct-specific glycoprotein (671 aa).

An N-terminal signal peptide occupies residues 1 to 21; sequence MGRLLLWVGLVLLMKPNDGTA. Residues 22–385 form the GH18 domain; that stretch reads YKLVCYFTNW…HILNELLVRA (364 aa). C26 and C51 form a disulfide bridge. Residues 71 to 72, 98 to 101, Y142, 211 to 214, and W355 contribute to the chitin site; these read LQ, GGWN, and LSYD. N402 carries N-linked (GlcNAc...) asparagine glycosylation. 8 repeat units span residues 490–504, 505–519, 520–534, 535–549, 550–564, 565–579, 580–594, and 595–609. The 8 X 15 AA tandem repeats stretch occupies residues 490–609; sequence TGMTVTVQTQ…GSQSVTPPGM (120 aa). Residues N511, N526, N541, N556, N571, and N586 are each glycosylated (N-linked (GlcNAc...) asparagine).

This sequence belongs to the glycosyl hydrolase 18 family. In terms of processing, highly O-glycosylated and also N-glycosylated. In terms of tissue distribution, oviduct.

The protein resides in the cytoplasmic vesicle. Its subcellular location is the secretory vesicle. Binds to oocyte zona pellucida in vivo. May play a role in the fertilization process and/or early embryonic development. Might act as a protective secretion influencing the first steps of the reproductive process necessary for the normal triggering of fertilization and early embryonic development. The sequence is that of Oviduct-specific glycoprotein (OVGP1) from Mesocricetus auratus (Golden hamster).